The sequence spans 148 residues: Large ribosomal subunit protein uL15A (148 aa).

Composition is skewed to basic residues over residues 1–13 (MPTH…KLRG) and 21–31 (RIGKHRKHPGG). A disordered region spans residues 1-36 (MPTHVSKTRKLRGHVSAGHGRIGKHRKHPGGRGKAG).

The protein belongs to the universal ribosomal protein uL15 family. In terms of assembly, component of the large ribosomal subunit (LSU). Mature yeast ribosomes consist of a small (40S) and a large (60S) subunit. The 40S small subunit contains 1 molecule of ribosomal RNA (18S rRNA) and at least 33 different proteins. The large 60S subunit contains 3 rRNA molecules (25S, 5.8S and 5S rRNA) and at least 46 different proteins.

Its subcellular location is the cytoplasm. Its function is as follows. Component of the ribosome, a large ribonucleoprotein complex responsible for the synthesis of proteins in the cell. The small ribosomal subunit (SSU) binds messenger RNAs (mRNAs) and translates the encoded message by selecting cognate aminoacyl-transfer RNA (tRNA) molecules. The large subunit (LSU) contains the ribosomal catalytic site termed the peptidyl transferase center (PTC), which catalyzes the formation of peptide bonds, thereby polymerizing the amino acids delivered by tRNAs into a polypeptide chain. The nascent polypeptides leave the ribosome through a tunnel in the LSU and interact with protein factors that function in enzymatic processing, targeting, and the membrane insertion of nascent chains at the exit of the ribosomal tunnel. The polypeptide is Large ribosomal subunit protein uL15A (rpl2802) (Schizosaccharomyces pombe (strain 972 / ATCC 24843) (Fission yeast)).